Consider the following 435-residue polypeptide: Serine carboxypeptidase-like 12 (435 aa).

The N-terminal stretch at 1-21 (MKSTPKLLLLLLFIINHHVDS) is a signal peptide. 3 disulfides stabilise this stretch: Cys80–Cys323, Cys244–Cys258, and Cys282–Cys289. Asn101 carries an N-linked (GlcNAc...) asparagine glycan. Ser176 is a catalytic residue. 3 N-linked (GlcNAc...) asparagine glycosylation sites follow: Asn313, Asn336, and Asn344. Asp360 is an active-site residue. An N-linked (GlcNAc...) asparagine glycan is attached at Asn376. His413 is an active-site residue. An N-linked (GlcNAc...) asparagine glycan is attached at Asn420.

It belongs to the peptidase S10 family. As to expression, expressed in roots.

It localises to the secreted. Its function is as follows. Probable carboxypeptidase. This is Serine carboxypeptidase-like 12 (SCPL12) from Arabidopsis thaliana (Mouse-ear cress).